Consider the following 72-residue polypeptide: UPF0352 protein Patl_3379 (72 aa).

This sequence belongs to the UPF0352 family.

The sequence is that of UPF0352 protein Patl_3379 from Pseudoalteromonas atlantica (strain T6c / ATCC BAA-1087).